The following is a 98-amino-acid chain: UPF0251 protein Sputcn32_0687 (98 aa).

This sequence belongs to the UPF0251 family.

The protein is UPF0251 protein Sputcn32_0687 of Shewanella putrefaciens (strain CN-32 / ATCC BAA-453).